Consider the following 497-residue polypeptide: Protein root UVB sensitive 6 (497 aa).

It belongs to the RUS1 family.

Its function is as follows. Required for normal embryo development. In Arabidopsis thaliana (Mouse-ear cress), this protein is Protein root UVB sensitive 6.